Consider the following 225-residue polypeptide: Cyclin-dependent kinase inhibitor 3 (225 aa).

2 disordered regions span residues 47–94 (AAAA…QRRR) and 130–169 (ERKS…PLSP). Over residues 55-67 (CRRRHRRGGRRGC) the composition is skewed to basic residues. Low complexity predominate over residues 71–82 (GAGSARACGARS). The span at 143–153 (VAAEHAGEHKH) shows a compositional bias: basic and acidic residues.

The protein belongs to the CDI family. ICK/KRP subfamily.

This is Cyclin-dependent kinase inhibitor 3 (KRP3) from Oryza sativa subsp. japonica (Rice).